Here is a 146-residue protein sequence, read N- to C-terminus: Peptide methionine sulfoxide reductase MsrB (146 aa).

The 124-residue stretch at 2–125 (LKKNKDELND…NSAAVQFIPY (124 aa)) folds into the MsrB domain. Cys-114 functions as the Nucleophile in the catalytic mechanism.

It belongs to the MsrB Met sulfoxide reductase family.

The enzyme catalyses L-methionyl-[protein] + [thioredoxin]-disulfide + H2O = L-methionyl-(R)-S-oxide-[protein] + [thioredoxin]-dithiol. The polypeptide is Peptide methionine sulfoxide reductase MsrB (Staphylococcus carnosus (strain TM300)).